The sequence spans 484 residues: Protein nucleotidyltransferase YdiU (484 aa).

Glycine 81, glycine 83, arginine 84, lysine 103, aspartate 115, glycine 116, arginine 166, and arginine 173 together coordinate ATP. Catalysis depends on aspartate 244, which acts as the Proton acceptor. Positions 245 and 254 each coordinate Mg(2+). Aspartate 254 lines the ATP pocket.

The protein belongs to the SELO family. Mg(2+) serves as cofactor. It depends on Mn(2+) as a cofactor.

The enzyme catalyses L-seryl-[protein] + ATP = 3-O-(5'-adenylyl)-L-seryl-[protein] + diphosphate. The catalysed reaction is L-threonyl-[protein] + ATP = 3-O-(5'-adenylyl)-L-threonyl-[protein] + diphosphate. It catalyses the reaction L-tyrosyl-[protein] + ATP = O-(5'-adenylyl)-L-tyrosyl-[protein] + diphosphate. It carries out the reaction L-histidyl-[protein] + UTP = N(tele)-(5'-uridylyl)-L-histidyl-[protein] + diphosphate. The enzyme catalyses L-seryl-[protein] + UTP = O-(5'-uridylyl)-L-seryl-[protein] + diphosphate. The catalysed reaction is L-tyrosyl-[protein] + UTP = O-(5'-uridylyl)-L-tyrosyl-[protein] + diphosphate. Functionally, nucleotidyltransferase involved in the post-translational modification of proteins. It can catalyze the addition of adenosine monophosphate (AMP) or uridine monophosphate (UMP) to a protein, resulting in modifications known as AMPylation and UMPylation. The chain is Protein nucleotidyltransferase YdiU from Shewanella baltica (strain OS223).